A 99-amino-acid chain; its full sequence is C-C motif chemokine 17 (99 aa).

Positions 1–23 (MMSLKLLLLVMLLLGASLQVTHA) are cleaved as a signal peptide. 2 disulfide bridges follow: Cys33-Cys57 and Cys34-Cys73.

This sequence belongs to the intercrine beta (chemokine CC) family. Expressed in thymus and also in spleen, lung, lymph node, kidney, small intestine, colon and skin.

The protein localises to the secreted. Chemokine, which displays chemotactic activity for T lymphocytes, preferentially Th2 cells, but not monocytes or granulocytes. Therefore plays an important role in a wide range of inflammatory and immunological processes. Acts by binding to CCR4 at T-cell surface. Mediates GM-CSF/CSF2-driven pain and inflammation. In the brain, required to maintain the typical, highly branched morphology of hippocampal microglia under homeostatic conditions. May be important for the appropriate adaptation of microglial morphology and synaptic plasticity to acute lipopolysaccharide (LPS)-induced neuroinflammation. Plays a role in wound healing, mainly by inducing fibroblast migration into the wound. This chain is C-C motif chemokine 17 (CCL17), found in Felis catus (Cat).